We begin with the raw amino-acid sequence, 141 residues long: HTH-type transcriptional repressor NsrR (141 aa).

Positions 2-129 (QLTSFTDYAL…DDCSIAELLD (128 aa)) constitute an HTH rrf2-type domain. The H-T-H motif DNA-binding region spans 28-51 (ITDVTELFGVSRNHMVKVINRLGQ). 3 residues coordinate [2Fe-2S] cluster: cysteine 91, cysteine 96, and cysteine 102.

It depends on [2Fe-2S] cluster as a cofactor.

In terms of biological role, nitric oxide-sensitive repressor of genes involved in protecting the cell against nitrosative stress. May require iron for activity. This is HTH-type transcriptional repressor NsrR from Vibrio vulnificus (strain CMCP6).